Consider the following 751-residue polypeptide: Semaphorin-3C (751 aa).

Positions 1–20 (MAFRAICVLVGVFICSICVR) are cleaved as a signal peptide. Residues 28–511 (RVYLTFDELR…SNEGVSQVSL (484 aa)) form the Sema domain. N-linked (GlcNAc...) asparagine glycosylation occurs at Asn-81. Cys-101 and Cys-112 are oxidised to a cystine. Asn-123 carries N-linked (GlcNAc...) asparagine glycosylation. A disulfide bond links Cys-130 and Cys-139. N-linked (GlcNAc...) asparagine glycosylation is found at Asn-252 and Asn-268. Disulfide bonds link Cys-266-Cys-378 and Cys-290-Cys-338. The N-linked (GlcNAc...) asparagine glycan is linked to Asn-465. Cys-514 and Cys-532 are joined by a disulfide. One can recognise an Ig-like C2-type domain in the interval 571–655 (AYRNAAEIVQ…TENSFKQTIA (85 aa)). 2 N-linked (GlcNAc...) asparagine glycosylation sites follow: Asn-585 and Asn-586. Cys-643 and Cys-709 form a disulfide bridge.

This sequence belongs to the semaphorin family. In terms of assembly, interacts with PLXND1.

Its subcellular location is the secreted. Functionally, binds to plexin family members and plays an important role in the regulation of developmental processes. Required for normal cardiovascular development during embryogenesis. Functions as attractant for growing axons, and thereby plays an important role in axon growth and axon guidance. The polypeptide is Semaphorin-3C (Sema3c) (Mus musculus (Mouse)).